The primary structure comprises 412 residues: Mitochondrial distribution and morphology protein 12 (412 aa).

The SMP-LTD domain maps to 1 to 410; it reads MSIDLEWAKL…FPNFHTLVMG (410 aa). Disordered regions lie at residues 66–96, 108–136, 166–238, and 314–354; these read EDDE…DGYE, YTEG…SPTD, QGSG…QQEN, and PAGD…KPLP. Residues 220 to 238 are compositionally biased toward low complexity; sequence NQPVFPSQQPQQQQPQQEN.

This sequence belongs to the MDM12 family. In terms of assembly, component of the ER-mitochondria encounter structure (ERMES) or MDM complex, composed of MMM1, MDM10, MDM12 and MDM34. An MMM1 homodimer associates with one molecule of MDM12 on each side in a pairwise head-to-tail manner, and the SMP-LTD domains of MMM1 and MDM12 generate a continuous hydrophobic tunnel for phospholipid trafficking.

The protein resides in the mitochondrion outer membrane. It localises to the endoplasmic reticulum membrane. Component of the ERMES/MDM complex, which serves as a molecular tether to connect the endoplasmic reticulum (ER) and mitochondria. Components of this complex are involved in the control of mitochondrial shape and protein biogenesis, and function in nonvesicular lipid trafficking between the ER and mitochondria. MDM12 is required for the interaction of the ER-resident membrane protein MMM1 and the outer mitochondrial membrane-resident beta-barrel protein MDM10. The MDM12-MMM1 subcomplex functions in the major beta-barrel assembly pathway that is responsible for biogenesis of all mitochondrial outer membrane beta-barrel proteins, and acts in a late step after the SAM complex. The MDM10-MDM12-MMM1 subcomplex further acts in the TOM40-specific pathway after the action of the MDM12-MMM1 complex. Essential for establishing and maintaining the structure of mitochondria and maintenance of mtDNA nucleoids. The polypeptide is Mitochondrial distribution and morphology protein 12 (Coprinopsis cinerea (strain Okayama-7 / 130 / ATCC MYA-4618 / FGSC 9003) (Inky cap fungus)).